Here is a 20-residue protein sequence, read N- to C-terminus: IVGGSEATSGQFPYQXSFQD.

Residues 1 to 20 form the Peptidase S1 domain; sequence IVGGSEATSGQFPYQXSFQD. The disordered stretch occupies residues 1-20; sequence IVGGSEATSGQFPYQXSFQD.

The protein belongs to the peptidase S1 family.

The enzyme catalyses Hydrolysis of proteins, with broad specificity for peptide bonds. Native collagen is cleaved about 75% of the length of the molecule from the N-terminus. Low activity on small molecule substrates of both trypsin and chymotrypsin.. Functionally, this enzyme is a serine protease capable of degrading the native triple helix of collagen. This Paralithodes camtschaticus (Red king crab) protein is Collagenolytic protease 36 kDa C.